Consider the following 608-residue polypeptide: Albumin 1 (608 aa).

The signal sequence occupies residues 1-14 (MQWLSVCSLLVLLS). The propeptide occupies 15-18 (VLSR). Albumin domains lie at 19 to 205 (SQAQ…TFQH), 206 to 398 (AVMK…AGSD), and 402 to 600 (KITD…KLVS). Disulfide bonds link cysteine 26–cysteine 72, cysteine 71–cysteine 80, cysteine 93–cysteine 108, cysteine 107–cysteine 118, cysteine 142–cysteine 187, cysteine 186–cysteine 195, cysteine 218–cysteine 264, cysteine 263–cysteine 271, cysteine 283–cysteine 299, cysteine 298–cysteine 309, cysteine 336–cysteine 381, cysteine 380–cysteine 389, cysteine 414–cysteine 460, cysteine 459–cysteine 471, cysteine 484–cysteine 500, cysteine 499–cysteine 510, cysteine 537–cysteine 582, and cysteine 581–cysteine 590. The N-linked (GlcNAc...) asparagine glycan is linked to asparagine 501.

This sequence belongs to the ALB/AFP/VDB family. Plasma.

It is found in the secreted. Its function is as follows. Binds water, Ca(2+), Na(+), K(+), fatty acids, hormones, bilirubin and drugs. Its main function is the regulation of the colloidal osmotic pressure of blood. The chain is Albumin 1 (alb1) from Salmo salar (Atlantic salmon).